Consider the following 666-residue polypeptide: Probable potassium transport system protein Kup (666 aa).

12 helical membrane-spanning segments follow: residues 16–36 (GFII…LYTM), 58–78 (ISLI…LIAL), 100–120 (PWLI…GALT), 141–161 (IYQN…VLFG), 165–185 (FGTG…FSFL), 221–241 (IFIL…YSDL), 253–273 (WPFV…WILA), 294–314 (VYLV…LISG), 343–363 (LYIP…VLAF), 373–393 (YGLA…YYLI), 399–419 (PILA…FFLA), and 424–444 (FMHG…VMFI).

It belongs to the HAK/KUP transporter (TC 2.A.72) family.

Its subcellular location is the cell membrane. It carries out the reaction K(+)(in) + H(+)(in) = K(+)(out) + H(+)(out). Its function is as follows. Transport of potassium into the cell. Likely operates as a K(+):H(+) symporter. This Streptococcus pyogenes serotype M49 (strain NZ131) protein is Probable potassium transport system protein Kup.